Here is a 141-residue protein sequence, read N- to C-terminus: Large ribosomal subunit protein uL16 (141 aa).

Belongs to the universal ribosomal protein uL16 family. As to quaternary structure, part of the 50S ribosomal subunit.

Functionally, binds 23S rRNA and is also seen to make contacts with the A and possibly P site tRNAs. The chain is Large ribosomal subunit protein uL16 from Aliarcobacter butzleri (strain RM4018) (Arcobacter butzleri).